The sequence spans 520 residues: Sodium-dependent dicarboxylate transporter SdcS (520 aa).

14 consecutive transmembrane segments (helical) span residues 30–50 (AGQL…LLFF), 55–75 (LPWK…WWIT), 77–97 (AIPI…GHIL), 104–124 (SEYG…AIAM), 160–180 (SMFV…LAII), 207–227 (IGYA…PLII), 242–262 (FAKW…ITWL), 298–318 (KVVQ…EFLL), 323–343 (VTSS…LFVI), 362–382 (ELPW…KGIS), 399–419 (GVSP…LTEV), 428–448 (MILP…LLLM), 452–472 (AMAA…AIIF), and 491–511 (LISA…VLGI).

Belongs to the SLC13A/DASS transporter (TC 2.A.47) family. NADC subfamily.

It is found in the cell membrane. Its function is as follows. Mediates the transport of the dicarboxylates fumarate, malate, and succinate across the cytoplasmic membrane via a Na(+)-electrochemical gradient. This is Sodium-dependent dicarboxylate transporter SdcS (sdcS) from Staphylococcus aureus (strain MSSA476).